A 581-amino-acid chain; its full sequence is ATP-dependent lipid A-core flippase (581 aa).

The next 5 membrane-spanning stretches (helical) occupy residues 15–35 (LWPI…ALII), 62–82 (ISIW…SSGF), 152–172 (IIGL…VLII), 252–272 (IIIQ…SSLP), and 274–294 (IIDE…IALM). The ABC transmembrane type-1 domain maps to 27–309 (IISIVALIIN…LTNVNANFQK (283 aa)). The ABC transporter domain occupies 341-577 (IKFKNITFTY…KGVYAQIYRL (237 aa)). Position 375–382 (375–382 (GSSGAGKS)) interacts with ATP.

The protein belongs to the ABC transporter superfamily. Lipid exporter (TC 3.A.1.106) family. Homodimer.

The protein localises to the cell membrane. The enzyme catalyses ATP + H2O + lipid A-core oligosaccharideSide 1 = ADP + phosphate + lipid A-core oligosaccharideSide 2.. Functionally, involved in lipopolysaccharide (LPS) biosynthesis. Translocates lipid A-core from the inner to the outer leaflet of the inner membrane. Transmembrane domains (TMD) form a pore in the inner membrane and the ATP-binding domain (NBD) is responsible for energy generation. In Wigglesworthia glossinidia brevipalpis, this protein is ATP-dependent lipid A-core flippase.